The sequence spans 245 residues: MMKKRVKRVLFKISGEALSDASSSDKISEERLSRLIAELKVVRNADVEVAVVIGGGNILRGLSQSQNLQINRVSADQMGMLATLINGMALADALKTEDVPNLLTSTLSCPQLAELYNPQKASDALSQGKVVICTMGAGAPYLTTDTGAALRACELKVDVLLKATMHVDGVYDRDPREFADAVRYDHISYRDFLSQGLGAIDPSAVSLCMEAGIPIRMFSFTKHSLEEAIFNTVGTVISSTEGGQL.

12–15 serves as a coordination point for ATP; that stretch reads KISG. G55 is a UMP binding site. 2 residues coordinate ATP: G56 and R60. UMP is bound by residues D76 and 137–144; that span reads AGAPYLTT. ATP contacts are provided by T164, Y171, and D174.

Belongs to the UMP kinase family. In terms of assembly, homohexamer.

It is found in the cytoplasm. The enzyme catalyses UMP + ATP = UDP + ADP. The protein operates within pyrimidine metabolism; CTP biosynthesis via de novo pathway; UDP from UMP (UMPK route): step 1/1. Its activity is regulated as follows. Inhibited by UTP. Catalyzes the reversible phosphorylation of UMP to UDP. The protein is Uridylate kinase of Chlamydia muridarum (strain MoPn / Nigg).